The primary structure comprises 2180 residues: Genome polyprotein (2180 aa).

4 disordered regions span residues 507 to 529 (DGADHTPKIPKRNVVLPSGAKDP), 624 to 679 (QPQK…YPIQ), 703 to 809 (KRAK…NTLP), and 822 to 848 (SEVEDEVDGMTEEPIPERRPEITPPKM). A coiled-coil region spans residues 573-624 (SKNQGLIRVLEQQLQDLNKRICPPGTSLFHFFDQQKSEMASLKEQIRLLKEQ). Polar residues-rich tracts occupy residues 631 to 643 (DTPSYQSSYQPFH) and 670 to 679 (PSLFSQYPIQ). Basic and acidic residues predominate over residues 703–716 (KRAKKKLQKDEVKQ). The segment covering 759–771 (SEDTSSQSYISTE) has biased composition (polar residues). The span at 784 to 807 (SEESTQLSQLSSSSNDSPENNENT) shows a compositional bias: low complexity. Acidic residues predominate over residues 822–832 (SEVEDEVDGMT). Residues 1113–1126 (CFTCGKIGHFSRNC) form a CCHC-type zinc finger. Asp-1227 acts as the For protease activity; shared with dimeric partner in catalysis. Asp-1480, Asp-1543, and Asp-1544 together coordinate Mg(2+). Disordered stretches follow at residues 1824-1848 (RRTRSNSTKSKADSSQSTGSSYKLS), 2115-2145 (NIVKNSPRKRKGKAKSKSSTRNEKRRAKNKC), and 2161-2180 (YSTKPSTPSWTQDSSSEPCI). The segment covering 1828–1847 (SNSTKSKADSSQSTGSSYKL) has biased composition (polar residues). Positions 2120-2145 (SPRKRKGKAKSKSSTRNEKRRAKNKC) are enriched in basic residues. Polar residues predominate over residues 2163 to 2180 (TKPSTPSWTQDSSSEPCI).

The protein belongs to the Petuviruses genome polyprotein family.

The enzyme catalyses DNA(n) + a 2'-deoxyribonucleoside 5'-triphosphate = DNA(n+1) + diphosphate. In terms of biological role, encodes presumably for at least four polypeptides: Movement protein (MP), capsid protein (CP), Protease (PR), and reverse transcriptase (RT). This is Genome polyprotein from Petunia (PVCV).